A 328-amino-acid chain; its full sequence is Malate dehydrogenase (328 aa).

12-18 provides a ligand contact to NAD(+); it reads GAAGQIG. The substrate site is built by Arg-92 and Arg-98. Residues Asn-105, Gln-112, and 129–131 contribute to the NAD(+) site; that span reads TGN. 2 residues coordinate substrate: Asn-131 and Arg-162. The Proton acceptor role is filled by His-187.

The protein belongs to the LDH/MDH superfamily. MDH type 2 family.

The enzyme catalyses (S)-malate + NAD(+) = oxaloacetate + NADH + H(+). Catalyzes the reversible oxidation of malate to oxaloacetate. The chain is Malate dehydrogenase from Nocardioides sp. (strain ATCC BAA-499 / JS614).